The sequence spans 884 residues: Lon protease homolog 2, peroxisomal (884 aa).

A Lon N-terminal domain is found at 12-255 (LAILPFRNKV…KATELVDRHL (244 aa)). The segment at 67–101 (SLLSPGVGSDSGEGGSKAPGGSAGESTKQDTKNGK) is disordered. The segment covering 75-89 (SDSGEGGSKAPGGSA) has biased composition (gly residues). 408 to 415 (GPPGVGKT) serves as a coordination point for ATP. In terms of domain architecture, Lon proteolytic spans 689-874 (VASPGVSVGL…EEVLDHAFEG (186 aa)). Catalysis depends on residues Ser780 and Lys823. The Microbody targeting signal signature appears at 882–884 (SKL).

The protein belongs to the peptidase S16 family.

The protein localises to the peroxisome matrix. The catalysed reaction is Hydrolysis of proteins in presence of ATP.. Its function is as follows. ATP-dependent serine protease that mediates the selective degradation of misfolded and unassembled polypeptides in the peroxisomal matrix. Necessary for type 2 peroxisome targeting signal (PTS2)-containing protein processing and facilitates peroxisome matrix protein import. This is Lon protease homolog 2, peroxisomal from Oryza sativa subsp. japonica (Rice).